A 152-amino-acid chain; its full sequence is Ribosome maturation factor RimP (152 aa).

It belongs to the RimP family.

The protein localises to the cytoplasm. Required for maturation of 30S ribosomal subunits. This is Ribosome maturation factor RimP from Alkalilimnicola ehrlichii (strain ATCC BAA-1101 / DSM 17681 / MLHE-1).